A 645-amino-acid chain; its full sequence is NADH-quinone oxidoreductase subunit L (645 aa).

Helical transmembrane passes span 7–27 (IMIIMLPLASSVINGLFLKVI), 31–51 (LAQIIATGFLSLSALFSLVIF), 88–108 (IMFIAVTWVSSVVHIYSLGYM), 114–134 (IIRFLSFLSLFTFFMLMLVSA), 137–157 (FLQLFFGWEGVGVCSYLLIGF), 177–197 (ASDFAFILGIITIIVYCGSAN), 213–233 (IFLQFSILDVICLLLFIGCMG), 252–272 (TPVSALIHAATMVTAGVFLVA), 284–304 (VLQFITIIGGVTCLFAASIAI), 312–332 (IIAYSTCSQLGYMFMACGVSA), 337–357 (IFHLVTHAFFKALLFLSAGSI), 380–400 (YGNSLIGSLALIGIYPLAGFY), 415–435 (FMFIFGIAAAILTAIYSMKII), 464–484 (LILLVAGSFFSGMIGYYLLSM), 510–530 (LYIKLLPMAVGIMGIVIGICV), and 623–643 (VFNYALYIVSFIVVVISVFVW).

The protein belongs to the complex I subunit 5 family.

It is found in the cell membrane. The catalysed reaction is a quinone + NADH + 5 H(+)(in) = a quinol + NAD(+) + 4 H(+)(out). NDH-1 shuttles electrons from NADH, via FMN and iron-sulfur (Fe-S) centers, to quinones in the respiratory chain. Couples the redox reaction to proton translocation (for every two electrons transferred, four hydrogen ions are translocated across the cytoplasmic membrane), and thus conserves the redox energy in a proton gradient. The protein is NADH-quinone oxidoreductase subunit L (nuoL) of Rickettsia felis (strain ATCC VR-1525 / URRWXCal2) (Rickettsia azadi).